An 810-amino-acid polypeptide reads, in one-letter code: RING finger protein unkempt homolog (810 aa).

The tract at residues 1–24 (MSKGPGPGGSAASSAPPAATAQVL) is disordered. Residues 10 to 19 (SAASSAPPAA) are compositionally biased toward low complexity. C3H1-type zinc fingers lie at residues 84-113 (YSPD…HRTT), 124-154 (YYKT…HGPH), 215-241 (NYKT…HNSK), 251-285 (KYRS…HTRT), and 293-321 (IYKS…HVEQ). The disordered stretch occupies residues 239-265 (NSKDRRRSPRKHKYRSSPCPNVKHGDE). Serine 240 bears the Phosphoserine mark. Residues 241-253 (KDRRRSPRKHKYR) show a composition bias toward basic residues. The segment at 324–343 (LSDDLQPSSTVSSPTQPGPV) is disordered. The span at 329 to 343 (QPSSTVSSPTQPGPV) shows a compositional bias: low complexity. Serine 374, serine 378, and serine 385 each carry phosphoserine. Over residues 569-585 (SASFHSASPSPPVSLSS) the composition is skewed to low complexity. A disordered region spans residues 569–602 (SASFHSASPSPPVSLSSHFLQQPQGHLSQSENTF). The segment covering 586–602 (HFLQQPQGHLSQSENTF) has biased composition (polar residues). Residue serine 631 is modified to Phosphoserine. A coiled-coil region spans residues 643–723 (GAAELARLRQ…QEELERLHSG (81 aa)). The RING-type; degenerate zinc-finger motif lies at 766–801 (SVKCLKCQEQNRAVLPCQHAVLCELCAEGSECPVCQ).

It belongs to the unkempt family.

Its subcellular location is the cytoplasm. In terms of biological role, sequence-specific RNA-binding protein which plays an important role in the establishment and maintenance of the early morphology of cortical neurons during embryonic development. Acts as a translation repressor and controls a translationally regulated cell morphology program to ensure proper structuring of the nervous system. Translational control depends on recognition of its binding element within target mRNAs which consists of a mandatory UAG trimer upstream of a U/A-rich motif. Associated with polysomes. This is RING finger protein unkempt homolog (UNK) from Canis lupus familiaris (Dog).